Reading from the N-terminus, the 42-residue chain is Phospholipase A1 (42 aa).

This sequence belongs to the AB hydrolase superfamily. Lipase family. In terms of processing, contains six disulfide bonds. As to expression, expressed by the venom gland.

It localises to the secreted. It carries out the reaction a 1,2-diacyl-sn-glycero-3-phosphocholine + H2O = a 2-acyl-sn-glycero-3-phosphocholine + a fatty acid + H(+). In terms of biological role, catalyzes the hydrolysis of phosphatidylcholine with phospholipase A1 activity. May act as an allergen and induce hemolytic activity. This chain is Phospholipase A1, found in Polistes gallicus (Paper wasp).